A 363-amino-acid chain; its full sequence is Phosrestin-2 (363 aa).

It belongs to the arrestin family.

The protein is Phosrestin-2 (ARR1) of Calliphora vicina (Blue blowfly).